The primary structure comprises 347 residues: Probable E3 ubiquitin-protein ligase DTX3 (347 aa).

The interval 113 to 157 (EHPEMHRAGPPPLRAAPLLPPGARGLPPPPPPLPPPLPPRLREEA) is disordered. Positions 121 to 151 (GPPPLRAAPLLPPGARGLPPPPPPLPPPLPP) are enriched in pro residues. An RING-type zinc finger spans residues 164–205 (CPICLGEIQNAKTLEKCRHSFCEGCITRALQVKKACPMCGRF).

The protein belongs to the Deltex family. In terms of assembly, homodimer. May form a heterodimers with other members of the Deltex family. Interacts with NOTCH1.

Its subcellular location is the cytoplasm. It carries out the reaction S-ubiquitinyl-[E2 ubiquitin-conjugating enzyme]-L-cysteine + [acceptor protein]-L-lysine = [E2 ubiquitin-conjugating enzyme]-L-cysteine + N(6)-ubiquitinyl-[acceptor protein]-L-lysine.. Its pathway is protein modification; protein ubiquitination. Functionally, regulator of Notch signaling, a signaling pathway involved in cell-cell communications that regulates a broad spectrum of cell-fate determinations. Probably acts both as a positive and negative regulator of Notch, depending on the developmental and cell context. Functions as an ubiquitin ligase protein in vitro, suggesting that it may regulate the Notch pathway via some ubiquitin ligase activity. This chain is Probable E3 ubiquitin-protein ligase DTX3 (DTX3), found in Homo sapiens (Human).